We begin with the raw amino-acid sequence, 225 residues long: Ribonuclease 3 (225 aa).

The RNase III domain maps to 7-129; that stretch reads IPRLCRTLGY…IIGAIYLDSD (123 aa). E42 contributes to the Mg(2+) binding site. The active site involves D46. Residues D115 and E118 each contribute to the Mg(2+) site. Residue E118 is part of the active site. One can recognise a DRBM domain in the interval 155-225; the sequence is DPKTLLQEYL…AAQVLELIKK (71 aa).

It belongs to the ribonuclease III family. Homodimer. It depends on Mg(2+) as a cofactor.

It is found in the cytoplasm. It catalyses the reaction Endonucleolytic cleavage to 5'-phosphomonoester.. In terms of biological role, digests double-stranded RNA. Involved in the processing of primary rRNA transcript to yield the immediate precursors to the large and small rRNAs (23S and 16S). Processes some mRNAs, and tRNAs when they are encoded in the rRNA operon. Processes pre-crRNA and tracrRNA of type II CRISPR loci if present in the organism. In Shewanella pealeana (strain ATCC 700345 / ANG-SQ1), this protein is Ribonuclease 3.